The following is a 947-amino-acid chain: Protein translocase subunit SecA (947 aa).

ATP contacts are provided by residues Gln87, 105–109 (GEGKT), and Asp525. Residues 905–928 (PADNADKTARNPNDPSTWGKVGRN) are disordered. Positions 931, 933, 942, and 943 each coordinate Zn(2+).

It belongs to the SecA family. Monomer and homodimer. Part of the essential Sec protein translocation apparatus which comprises SecA, SecYEG and auxiliary proteins SecDF-YajC and YidC. Zn(2+) serves as cofactor.

Its subcellular location is the cell inner membrane. The protein resides in the cytoplasm. It carries out the reaction ATP + H2O + cellular proteinSide 1 = ADP + phosphate + cellular proteinSide 2.. Part of the Sec protein translocase complex. Interacts with the SecYEG preprotein conducting channel. Has a central role in coupling the hydrolysis of ATP to the transfer of proteins into and across the cell membrane, serving both as a receptor for the preprotein-SecB complex and as an ATP-driven molecular motor driving the stepwise translocation of polypeptide chains across the membrane. The sequence is that of Protein translocase subunit SecA from Rhodopseudomonas palustris (strain BisB18).